Consider the following 542-residue polypeptide: Protein lin-9 homolog (542 aa).

Ala2 carries the post-translational modification N-acetylalanine. Residues 2–296 (AELDQLPDES…QKQRPSRFFM (295 aa)) form a sufficient for interaction with RB1 region. Lys21 is covalently cross-linked (Glycyl lysine isopeptide (Lys-Gly) (interchain with G-Cter in SUMO2)). 2 positions are modified to phosphoserine: Ser65 and Ser95. Phosphothreonine occurs at positions 96 and 304. Phosphoserine is present on residues Ser309 and Ser321. Residues 355–413 (IKKEHIKKLREMNTDAEKLKSYSMPISIEFQRRYATIVLELEQLNKDLNKVLHKVQQYC) adopt a coiled-coil conformation.

This sequence belongs to the lin-9 family. As to quaternary structure, component of the DREAM complex (also named LINC complex) at least composed of E2F4, E2F5, LIN9, LIN37, LIN52, LIN54, MYBL1, MYBL2, RBL1, RBL2, RBBP4, TFDP1 and TFDP2. The complex exists in quiescent cells where it represses cell cycle-dependent genes. It dissociates in S phase when LIN9, LIN37, LIN52 and LIN54 form a subcomplex that binds to MYBL2. Interacts with RB1.

The protein resides in the nucleus. The protein localises to the nucleoplasm. Functionally, acts as a tumor suppressor. Inhibits DNA synthesis. Its ability to inhibit oncogenic transformation is mediated through its association with RB1. Plays a role in the expression of genes required for the G1/S transition. This Macaca fascicularis (Crab-eating macaque) protein is Protein lin-9 homolog (LIN9).